Here is a 123-residue protein sequence, read N- to C-terminus: Large ribosomal subunit protein bL12 (123 aa).

Belongs to the bacterial ribosomal protein bL12 family. In terms of assembly, homodimer. Part of the ribosomal stalk of the 50S ribosomal subunit. Forms a multimeric L10(L12)X complex, where L10 forms an elongated spine to which 2 to 4 L12 dimers bind in a sequential fashion. Binds GTP-bound translation factors.

Forms part of the ribosomal stalk which helps the ribosome interact with GTP-bound translation factors. Is thus essential for accurate translation. The polypeptide is Large ribosomal subunit protein bL12 (Acholeplasma laidlawii (strain PG-8A)).